The chain runs to 691 residues: MAPFPEEVDVFTAPHWRMKQLVGLYCDKLSKTNFSNNNDFRALLQSLYATFKEFKMHEQIENEYIIGLLQQRSQTIYNVHSDNKLSEMLSLFEKGLKNVKNEYEQLNYAKQLKERLEAFTKDFLPHMKEEEEVFQPMLMEYFTYEELKDIKKKVIAQHCSQKDTAELLRGLSLWNQAEERQKFFKYSVDEKSDKEAEVSEQSTGITHLPPEVMVSIFSYLNPQELCRCSQVSTKWSQLAKTGSLWKHLYPVHWARGDWYSGPAAELDTEPDEEWVKSRRDESRAFQEWDEDADIDESEESGEESIAISIAQMEKRLLHGLIHNVLPYVGTSVKTLVLAYSSAVSSKMVRQILELCPNLEHLDLTQTDISDSAFDSWSWLGCCQSLRHLDLSGCEKITDVALEKISRALGILTTHESGLLKTSTSKVTSTTWKNKDITMQSFKQSACLHDVTNKDIGEEVDNEHPWTKPISSDDFTSPYVWMLDAEDLADIEDAVEWRHRNVESLCVMETASNFSCPSSACYSKDIVGLRTSVCWQQHCASPAFAYCGHSYCCTGTALRTMSALPESSALCRKAPRTRLLREKDLIYSGSEKSDQETGRVLLFLSLSGCYQITDHGLRVLTLGGGLPYLEHLNLSGCLTVTGAGLQDLVSACPSLNDEYFYYCDNINGPHADTASGCQNLQCGFRACCRSGE.

Positions 1-159 (MAPFPEEVDV…IKKKVIAQHC (159 aa)) are hemerythrin-like. Fe(3+) is bound by residues His15, His57, Glu58, Glu61, His80, His126, and Glu130. Positions 202 to 248 (STGITHLPPEVMVSIFSYLNPQELCRCSQVSTKWSQLAKTGSLWKHL) constitute an F-box domain. LRR repeat units follow at residues 340–364 (SSAVSSKMVRQILELCPNLEHLDLT), 365–392 (QTDISDSAFDSWSWLGCCQSLRHLDLSG), 393–418 (CEKITDVALEKISRALGILTTHESGL), 479–508 (VWMLDAEDLADIEDAVEWRHRNVESLCVME), 576–607 (TRLLREKDLIYSGSEKSDQETGRVLLFLSLSG), 608–635 (CYQITDHGLRVLTLGGGLPYLEHLNLSG), and 636–661 (CLTVTGAGLQDLVSACPSLNDEYFYY). [2Fe-2S] cluster contacts are provided by Cys662, Cys676, Cys686, and Cys687.

As to quaternary structure, part of a SCF (SKP1-cullin-F-box) protein ligase complex. Interacts with ACO1/IRP1, IREB2/IRP2; the interaction depends on the [2Fe-2S] cluster. Interacts with DCTN1/p150-glued. The cofactor is [2Fe-2S] cluster. In terms of processing, polybiquitinated upon iron and oxygen depletion, leading to its degradation by the proteasome. Ubiquitination is regulated by the hemerythrin-like region that acts as an oxygen and iron sensor. Undergoes constitutive ubiquitin-dependent degradation at the steady state by HERC2.

Its subcellular location is the cytoplasm. It localises to the perinuclear region. The protein localises to the nucleus. The protein operates within protein modification; protein ubiquitination. With respect to regulation, an iron-sulfur cluster promotes IRP2 polyubiquitination and degradation in response to both iron and oxygen concentrations. Component of some SCF (SKP1-cullin-F-box) protein ligase complex that plays a central role in iron homeostasis by promoting the ubiquitination and subsequent degradation of IREB2/IRP2. The C-terminal domain of FBXL5 contains a redox-sensitive [2Fe-2S] cluster that, upon oxidation, promotes binding to IRP2 to effect its oxygen-dependent degradation. Under iron deficiency conditions, the N-terminal hemerythrin-like (Hr) region, which contains a diiron metal center, cannot bind iron and undergoes conformational changes that destabilize the FBXL5 protein and cause its ubiquitination and degradation. When intracellular iron levels start rising, the Hr region is stabilized. Additional increases in iron levels facilitate the assembly and incorporation of a redox active [2Fe-2S] cluster in the C-terminal domain. Only when oxygen level is high enough to maintain the cluster in its oxidized state can FBXL5 recruit IRP2 as a substrate for polyubiquination and degradation. Promotes ubiquitination and subsequent degradation of the dynactin complex component DCTN1. Within the nucleus, promotes the ubiquitination of SNAI1; preventing its interaction with DNA and promoting its degradation. Negatively regulates DNA damage response by mediating the ubiquitin-proteasome degradation of the DNA repair protein NABP2. The sequence is that of F-box/LRR-repeat protein 5 (FBXL5) from Bos taurus (Bovine).